Consider the following 38-residue polypeptide: Photosystem I reaction center subunit IX (38 aa).

The chain crosses the membrane as a helical span at residues 4–24 (FLTTAPVFSAIWFTLTAGIMI).

Belongs to the PsaJ family.

The protein resides in the plastid. It localises to the organellar chromatophore thylakoid membrane. May help in the organization of the PsaE and PsaF subunits. The protein is Photosystem I reaction center subunit IX of Paulinella chromatophora.